We begin with the raw amino-acid sequence, 320 residues long: V-set and transmembrane domain-containing protein 4 (320 aa).

An N-terminal signal peptide occupies residues 1 to 23 (MRLLALAAAALLARAPAPEVCAA). The 132-residue stretch at 24-155 (LNVTVSPGPV…SSATEMRVIS (132 aa)) folds into the Ig-like domain. Over 24 to 180 (LNVTVSPGPV…WAFFEDLYVY (157 aa)) the chain is Extracellular. N-linked (GlcNAc...) asparagine glycosylation is found at N25, N41, N89, and N144. A disulfide bond links C46 and C127. Residues 181-201 (AVLVCCVGILSILLFMLVIVW) form a helical membrane-spanning segment. Topologically, residues 202–320 (QSVFNKRKSR…AQILFEENKL (119 aa)) are cytoplasmic.

In terms of processing, proteolytically cleaved to generate a bioactive peptide.

It localises to the secreted. Its subcellular location is the cell membrane. Functionally, peptide Lv enhances L-type voltage-gated calcium channel (L-VGCC) currents in retinal photoreceptors. In Homo sapiens (Human), this protein is V-set and transmembrane domain-containing protein 4 (VSTM4).